The primary structure comprises 275 residues: Large ribosomal subunit protein uL2c (275 aa).

The segment at 225 to 275 (MNPCDHPHGGGEGRSPIGRPRPVSPWGKPALGQRTRKGHKYSDQMILRRRK) is disordered.

It belongs to the universal ribosomal protein uL2 family. Part of the 50S ribosomal subunit.

Its subcellular location is the plastid. It localises to the chloroplast. This is Large ribosomal subunit protein uL2c (rpl2) from Oltmannsiellopsis viridis (Marine flagellate).